The sequence spans 121 residues: UPF0102 protein DehaBAV1_0707 (121 aa).

This sequence belongs to the UPF0102 family.

The chain is UPF0102 protein DehaBAV1_0707 from Dehalococcoides mccartyi (strain ATCC BAA-2100 / JCM 16839 / KCTC 5957 / BAV1).